A 198-amino-acid chain; its full sequence is MAFELPPLPYAHDALQPHISKETLEFHHDKHHNTYVVNLNNLVPGTEFEGKTLEEIVKTSSGGIFNNAAQVWNHTFYWNCLAPNAGGQPTGALADAINAAFGSFDKFKEEFTKTSVGTFGSGWGWLVKKADGSLALASTIGAGCPLTSGDTPLLTCDVWEHAYYIDYRNLRPKYVEAFWNLVNWAFVAEQFEGKTFKA.

Fe(3+)-binding residues include His-27, His-74, Asp-157, and His-161.

The protein belongs to the iron/manganese superoxide dismutase family. As to quaternary structure, homodimer. Fe(3+) is required as a cofactor.

The enzyme catalyses 2 superoxide + 2 H(+) = H2O2 + O2. Its function is as follows. Destroys superoxide anion radicals which are normally produced within the cells and which are toxic to biological systems. In Pseudomonas putida (Arthrobacter siderocapsulatus), this protein is Superoxide dismutase [Fe] (sodB).